A 143-amino-acid chain; its full sequence is Large ribosomal subunit protein uL16c (143 aa).

Belongs to the universal ribosomal protein uL16 family. In terms of assembly, part of the 50S ribosomal subunit.

The protein localises to the plastid. The protein resides in the chloroplast. In Cyanidioschyzon merolae (strain NIES-3377 / 10D) (Unicellular red alga), this protein is Large ribosomal subunit protein uL16c.